A 355-amino-acid polypeptide reads, in one-letter code: Cyclic nucleotide-gated potassium channel RHE_CH03180 (355 aa).

Over 1-12 the chain is Cytoplasmic; that stretch reads MSAVPFSKISTP. Residues 13–30 form a helical membrane-spanning segment; the sequence is LNALFATIGLLVVAALTT. Over 31 to 38 the chain is Periplasmic; the sequence is QGLTGQER. The chain crosses the membrane as a helical span at residues 39–61; the sequence is LVFELLLAAIWLAYVLQLSGTLL. Over 62-73 the chain is Cytoplasmic; the sequence is SRRRRLSGEMTA. A helical membrane pass occupies residues 74–93; the sequence is LVIDLLAVLVPAAAFLFVGS. Residues 94-111 traverse the membrane as a helical segment; the sequence is RDRDLYCAIWLLKPLRDS. The Cytoplasmic portion of the chain corresponds to 112-128; it reads TFFRLLAKVVANESRNL. The helical transmembrane segment at 129–149 threads the bilayer; that stretch reads LGVTSVFGIVLFGAALAGYII. The Periplasmic segment spans residues 150-160; the sequence is ERDVQPDKFGS. The pore-forming intramembrane region spans 161 to 179; that stretch reads IPQAMWWAVVTLSTTGYGD. Positions 174 to 179 match the Selectivity filter motif; it reads TTGYGD. Residues 180–184 lie on the Periplasmic side of the membrane; sequence EIPQS. A helical transmembrane segment spans residues 185–209; sequence LAGRVLAGLVMMSGIGIFALWAGIL. At 210-355 the chain is on the cytoplasmic side; sequence ATGFYEEVRR…LERRGGPPKE (146 aa). 3',5'-cyclic AMP-binding positions include 297–298, 307–308, and R348; these read GE and RS.

The protein belongs to the potassium channel family. Homotetramer.

Its subcellular location is the cell membrane. Cyclic nucleotide-regulated potassium channel activated by cAMP. The chain is Cyclic nucleotide-gated potassium channel RHE_CH03180 from Rhizobium etli (strain ATCC 51251 / DSM 11541 / JCM 21823 / NBRC 15573 / CFN 42).